The primary structure comprises 261 residues: 2-phytyl-1,4-beta-naphthoquinone methyltransferase, chloroplastic (261 aa).

The N-terminal 30 residues, 1 to 30 (MAALLGIVSPVTFTGKHPVNSRSRRRTVVK), are a transit peptide targeting the chloroplast.

The protein belongs to the class I-like SAM-binding methyltransferase superfamily. MenG/UbiE family.

The protein localises to the plastid. It is found in the chloroplast. The catalysed reaction is demethylphylloquinol + S-adenosyl-L-methionine = phylloquinol + S-adenosyl-L-homocysteine + H(+). Functionally, involved in the biosynthesis of phylloquinone (vitamin K1). Methyltransferase required for the conversion of 2-phytyl-1,4-beta-naphthoquinol to phylloquinol. The protein is 2-phytyl-1,4-beta-naphthoquinone methyltransferase, chloroplastic of Arabidopsis thaliana (Mouse-ear cress).